Here is a 73-residue protein sequence, read N- to C-terminus: Cytochrome b559 subunit alpha (73 aa).

Residues 21-35 (IIHSITVPSLFIAGW) traverse the membrane as a helical segment. H23 is a binding site for heme.

Belongs to the PsbE/PsbF family. As to quaternary structure, heterodimer of an alpha subunit and a beta subunit. PSII is composed of 1 copy each of membrane proteins PsbA, PsbB, PsbC, PsbD, PsbE, PsbF, PsbH, PsbI, PsbJ, PsbK, PsbL, PsbM, PsbT, PsbY, PsbZ, Psb30/Ycf12, at least 3 peripheral proteins of the oxygen-evolving complex and a large number of cofactors. It forms dimeric complexes. Heme b is required as a cofactor.

The protein localises to the plastid. Its subcellular location is the chloroplast thylakoid membrane. In terms of biological role, this b-type cytochrome is tightly associated with the reaction center of photosystem II (PSII). PSII is a light-driven water:plastoquinone oxidoreductase that uses light energy to abstract electrons from H(2)O, generating O(2) and a proton gradient subsequently used for ATP formation. It consists of a core antenna complex that captures photons, and an electron transfer chain that converts photonic excitation into a charge separation. The sequence is that of Cytochrome b559 subunit alpha from Bigelowiella natans (Pedinomonas minutissima).